Reading from the N-terminus, the 239-residue chain is Sugar fermentation stimulation protein homolog (239 aa).

This sequence belongs to the SfsA family.

In Alcanivorax borkumensis (strain ATCC 700651 / DSM 11573 / NCIMB 13689 / SK2), this protein is Sugar fermentation stimulation protein homolog.